The following is a 258-amino-acid chain: 4-hydroxy-tetrahydrodipicolinate reductase (258 aa).

Residue 10 to 15 coordinates NAD(+); sequence GCLGRM. Position 38 (Lys-38) interacts with NADP(+). NAD(+) is bound by residues 89–91 and 113–116; these read GTT and AGNM. Residue His-146 is the Proton donor/acceptor of the active site. A (S)-2,3,4,5-tetrahydrodipicolinate-binding site is contributed by His-147. Lys-150 acts as the Proton donor in catalysis. Position 156–157 (156–157) interacts with (S)-2,3,4,5-tetrahydrodipicolinate; that stretch reads GT.

This sequence belongs to the DapB family.

The protein localises to the cytoplasm. It carries out the reaction (S)-2,3,4,5-tetrahydrodipicolinate + NAD(+) + H2O = (2S,4S)-4-hydroxy-2,3,4,5-tetrahydrodipicolinate + NADH + H(+). The enzyme catalyses (S)-2,3,4,5-tetrahydrodipicolinate + NADP(+) + H2O = (2S,4S)-4-hydroxy-2,3,4,5-tetrahydrodipicolinate + NADPH + H(+). It participates in amino-acid biosynthesis; L-lysine biosynthesis via DAP pathway; (S)-tetrahydrodipicolinate from L-aspartate: step 4/4. In terms of biological role, catalyzes the conversion of 4-hydroxy-tetrahydrodipicolinate (HTPA) to tetrahydrodipicolinate. This is 4-hydroxy-tetrahydrodipicolinate reductase from Pelagibacter ubique (strain HTCC1062).